Reading from the N-terminus, the 693-residue chain is Golgin subfamily A member 6B (693 aa).

A compositionally biased stretch (pro residues) spans 1–11 (MWPQPYLPPHP). 4 disordered regions span residues 1 to 72 (MWPQ…SQYQ), 497 to 551 (LPGE…VERR), 629 to 650 (NPAD…AGEQ), and 660 to 679 (NNVE…DNPT). The stretch at 77–611 (ALESSSVTIS…KLLELQELVL (535 aa)) forms a coiled coil. Basic and acidic residues predominate over residues 537–551 (LPKEKADGTEQVERR).

Belongs to the GOLGA6 family.

The sequence is that of Golgin subfamily A member 6B (GOLGA6B) from Homo sapiens (Human).